Reading from the N-terminus, the 265-residue chain is Glycosylphosphatidylinositol anchor biosynthesis protein 11 (265 aa).

The next 2 membrane-spanning stretches (helical) occupy residues 49 to 69 (LLVV…SGLT) and 79 to 99 (GFLT…INLL). 2 N-linked (GlcNAc...) asparagine glycosylation sites follow: asparagine 111 and asparagine 112. 4 consecutive transmembrane segments (helical) span residues 137–157 (IFVS…MGAP), 166–186 (LYLS…LSNL), 209–229 (ILSS…PIPL), and 240–260 (ITLL…SLIV).

It belongs to the PIGF family.

It is found in the endoplasmic reticulum membrane. It participates in glycolipid biosynthesis; glycosylphosphatidylinositol-anchor biosynthesis. In terms of biological role, acts in the GPI biosynthetic pathway between GlcNAc-PI synthesis and GPI transfer to protein. This chain is Glycosylphosphatidylinositol anchor biosynthesis protein 11 (GPI11), found in Candida albicans (strain SC5314 / ATCC MYA-2876) (Yeast).